A 425-amino-acid polypeptide reads, in one-letter code: MTHIDWLVQTDPLVAEMVQREVQRQQQHLELIASENFTSPAVMAAQGTVLTNKYAEGLPGKRYYGGCEFVDEVEQLAIDRAKELFGAAHANVQPHSGAQANFAVFLALLNPGDTIMGMDLSHGGHLTHGSPVNVSGKWFNVVHYGVHPETERLDMDQVRDLARQHRPKLIICGYSAYPRVIPFAEFRQIADEVGAYLMADIAHIAGLVASGYHPNPVPLCDVVTTTTHKTLRGPRGGLILTRDEDLGKKLDKAVFPGTQGGPLEHVIAAKAVAFGEALKPEFKAYCGQVIRNAQALAAGLQARQLRLVSGGTDNHLMLIDLRSVNLTGKEADRLMGEIHITTNKNTIPFDPASPFVTSGLRLGTPALTTRGFTEVEFAEVAEIISDRLHAPEDEAIKNRCRERVAALCAQFPLYPHLQFPQPVLA.

Residues leucine 120 and 124-126 (GHL) each bind (6S)-5,6,7,8-tetrahydrofolate. Lysine 229 bears the N6-(pyridoxal phosphate)lysine mark. 353-355 (SPF) provides a ligand contact to (6S)-5,6,7,8-tetrahydrofolate.

The protein belongs to the SHMT family. In terms of assembly, homodimer. Pyridoxal 5'-phosphate is required as a cofactor.

Its subcellular location is the cytoplasm. The catalysed reaction is (6R)-5,10-methylene-5,6,7,8-tetrahydrofolate + glycine + H2O = (6S)-5,6,7,8-tetrahydrofolate + L-serine. The protein operates within one-carbon metabolism; tetrahydrofolate interconversion. Its pathway is amino-acid biosynthesis; glycine biosynthesis; glycine from L-serine: step 1/1. Functionally, catalyzes the reversible interconversion of serine and glycine with tetrahydrofolate (THF) serving as the one-carbon carrier. This reaction serves as the major source of one-carbon groups required for the biosynthesis of purines, thymidylate, methionine, and other important biomolecules. Also exhibits THF-independent aldolase activity toward beta-hydroxyamino acids, producing glycine and aldehydes, via a retro-aldol mechanism. The sequence is that of Serine hydroxymethyltransferase from Thermosynechococcus vestitus (strain NIES-2133 / IAM M-273 / BP-1).